A 205-amino-acid polypeptide reads, in one-letter code: Listeria nuclear targeted protein A (205 aa).

The N-terminal stretch at 1–36 is a signal peptide; the sequence is MKKLVAWFNGLSKMWKVVVIIGAVFVVIIALTTGED.

Interacts specifically with host BAHD1.

Its subcellular location is the secreted. It is found in the host nucleus. Its function is as follows. Relieves the repression of host cell immune response genes (interferon-stimulated genes) by blocking the recruitment of host BAHD1 to these genes. May modulate interferon-mediated immune response to control bacterial colonization of the host. The polypeptide is Listeria nuclear targeted protein A (lntA) (Listeria monocytogenes serovar 1/2a (strain ATCC BAA-679 / EGD-e)).